A 420-amino-acid chain; its full sequence is UDP-N-acetyl-D-mannosamine dehydrogenase (420 aa).

The NAD(+) site is built by Tyr-13, Ile-14, Asp-33, Thr-85, and Thr-126. Positions 160, 161, 212, 216, 219, 250, 252, and 263 each coordinate UDP-N-acetyl-alpha-D-mannosaminouronate. The active-site Proton donor/acceptor is Lys-212. Cys-266 (nucleophile) is an active-site residue. 2 residues coordinate UDP-N-acetyl-alpha-D-mannosaminouronate: Phe-330 and Lys-331. Arg-338 lines the NAD(+) pocket. UDP-N-acetyl-alpha-D-mannosaminouronate is bound at residue Lys-416.

The protein belongs to the UDP-glucose/GDP-mannose dehydrogenase family. WecC subfamily. As to quaternary structure, homodimer.

The enzyme catalyses UDP-N-acetyl-alpha-D-mannosamine + 2 NAD(+) + H2O = UDP-N-acetyl-alpha-D-mannosaminouronate + 2 NADH + 3 H(+). It functions in the pathway bacterial outer membrane biogenesis; enterobacterial common antigen biosynthesis. Catalyzes the four-electron oxidation of UDP-N-acetyl-D-mannosamine (UDP-ManNAc), reducing NAD(+) and releasing UDP-N-acetylmannosaminuronic acid (UDP-ManNAcA). This Shigella flexneri protein is UDP-N-acetyl-D-mannosamine dehydrogenase.